A 157-amino-acid polypeptide reads, in one-letter code: Probable succinate transporter subunit YjjB (157 aa).

The next 4 helical transmembrane spans lie at 2–22 (GIIS…IPAV), 55–75 (AGFN…SIGI), 87–107 (IFTV…TAMI), and 129–149 (FLKA…PGLW).

This sequence belongs to the ThrE exporter (TC 2.A.79) family. The transporter is composed of YjjB and YjjP.

The protein resides in the cell inner membrane. Involved in succinate export with YjjP. Both proteins are required for export. This Klebsiella pneumoniae (strain 342) protein is Probable succinate transporter subunit YjjB.